Reading from the N-terminus, the 316-residue chain is Pantothenate kinase (316 aa).

Position 95 to 102 (95 to 102 (GSVAVGKS)) interacts with ATP.

The protein belongs to the prokaryotic pantothenate kinase family.

It localises to the cytoplasm. It carries out the reaction (R)-pantothenate + ATP = (R)-4'-phosphopantothenate + ADP + H(+). The protein operates within cofactor biosynthesis; coenzyme A biosynthesis; CoA from (R)-pantothenate: step 1/5. In Klebsiella pneumoniae (strain 342), this protein is Pantothenate kinase.